A 330-amino-acid polypeptide reads, in one-letter code: Basic leucine zipper 2 (330 aa).

Residues 1 to 207 form a disordered region; that stretch reads MAQLPPKIPT…NRQSAQRSRV (207 aa). The segment covering 21-34 has biased composition (basic residues); it reads GHHHHAAHGHHHQR. The segment covering 45–56 has biased composition (pro residues); that stretch reads PLPPFPLPPPAP. Low complexity-rich tracts occupy residues 57–72 and 139–151; these read ANGG…QHQP and QPAA…SSPS. Basic and acidic residues predominate over residues 155–166; it reads SMNDEKQDKGET. A bZIP domain is found at 188–244; it reads DPKRVKRILANRQSAQRSRVRKLQYISELERSVTSLQTEVSALSPRVAFLDHQRSLL. Residues 190-209 are basic motif; it reads KRVKRILANRQSAQRSRVRK. Positions 216 to 244 are leucine-zipper; sequence LERSVTSLQTEVSALSPRVAFLDHQRSLL. A disordered region spans residues 267–330; sequence GGTEEGDREA…LVIGRDPDAL (64 aa).

In terms of tissue distribution, expressed in roots, shoots and panicles.

It is found in the nucleus. Transcription regulator. This is Basic leucine zipper 2 (BZIP02) from Oryza sativa subsp. japonica (Rice).